Consider the following 425-residue polypeptide: 26S proteasome regulatory subunit 7 (425 aa).

ATP is bound at residue 208 to 215 (GPPGTGKT).

It belongs to the AAA ATPase family.

Its subcellular location is the cytoplasm. The protein resides in the nucleus. In terms of biological role, the 26S proteasome is involved in the ATP-dependent degradation of ubiquitinated proteins. The regulatory (or ATPase) complex confers ATP dependency and substrate specificity to the 26S complex. This chain is 26S proteasome regulatory subunit 7 (RPT1), found in Prunus persica (Peach).